The chain runs to 449 residues: Glucose-6-phosphate isomerase (449 aa).

The active-site Proton donor is the glutamate 291. Active-site residues include histidine 312 and lysine 426.

This sequence belongs to the GPI family.

Its subcellular location is the cytoplasm. It catalyses the reaction alpha-D-glucose 6-phosphate = beta-D-fructose 6-phosphate. It participates in carbohydrate biosynthesis; gluconeogenesis. The protein operates within carbohydrate degradation; glycolysis; D-glyceraldehyde 3-phosphate and glycerone phosphate from D-glucose: step 2/4. Catalyzes the reversible isomerization of glucose-6-phosphate to fructose-6-phosphate. The protein is Glucose-6-phosphate isomerase of Streptococcus pyogenes serotype M28 (strain MGAS6180).